Reading from the N-terminus, the 456-residue chain is Argininosuccinate lyase (456 aa).

The protein belongs to the lyase 1 family. Argininosuccinate lyase subfamily.

It localises to the cytoplasm. It carries out the reaction 2-(N(omega)-L-arginino)succinate = fumarate + L-arginine. The protein operates within amino-acid biosynthesis; L-arginine biosynthesis; L-arginine from L-ornithine and carbamoyl phosphate: step 3/3. The protein is Argininosuccinate lyase of Listeria monocytogenes serovar 1/2a (strain ATCC BAA-679 / EGD-e).